The sequence spans 262 residues: Chondroitin proteoglycan 3 (262 aa).

A signal peptide spans 1–17 (MRSSFIFALLLIGAALA). The tract at residues 37 to 68 (FSGEASGEASGEASGEFSGEGSGEGSGELSPE) is disordered. A compositionally biased stretch (low complexity) spans 39 to 53 (GEASGEASGEASGEF). Residues Asn-140, Asn-148, and Asn-224 are each glycosylated (N-linked (GlcNAc...) asparagine).

The polypeptide is Chondroitin proteoglycan 3 (cpg-3) (Caenorhabditis briggsae).